Consider the following 295-residue polypeptide: 5,10-methylenetetrahydrofolate reductase (295 aa).

Glu28 acts as the Proton donor/acceptor in catalysis. Thr59 lines the NADH pocket. His89, Arg119, Gly120, Asp121, Ala133, Tyr153, His157, Ala160, Asp166, Asn169, Arg172, and Lys173 together coordinate FAD. Asp121 is a binding site for (6S)-5-methyl-5,6,7,8-tetrahydrofolate. Gln184 is an NADH binding site. (6S)-5-methyl-5,6,7,8-tetrahydrofolate contacts are provided by Gln184, Gln220, and Lys280.

It belongs to the methylenetetrahydrofolate reductase family. It depends on FAD as a cofactor.

The enzyme catalyses (6S)-5-methyl-5,6,7,8-tetrahydrofolate + NAD(+) = (6R)-5,10-methylene-5,6,7,8-tetrahydrofolate + NADH + H(+). Its pathway is one-carbon metabolism; tetrahydrofolate interconversion. It participates in amino-acid biosynthesis; L-methionine biosynthesis via de novo pathway. In terms of biological role, catalyzes the NADH-dependent reduction of 5,10-methylenetetrahydrofolate to 5-methyltetrahydrofolate. Is required to provide the methyl group necessary for methionine synthetase to convert homocysteine to methionine; the methyl group is given by 5-methyltetrahydrofolate. This Buchnera aphidicola subsp. Baizongia pistaciae (strain Bp) protein is 5,10-methylenetetrahydrofolate reductase (metF).